Reading from the N-terminus, the 279-residue chain is Proteasome subunit beta (279 aa).

A propeptide spans 1 to 56 (MASQAMSWRGEGERVVRDLAAASTSSFVEHLSQSRPDLLPFGQALPAGVLPQTPHA) (removed in mature form; by autocatalysis). T57 functions as the Nucleophile in the catalytic mechanism.

It belongs to the peptidase T1B family. As to quaternary structure, the 20S proteasome core is composed of 14 alpha and 14 beta subunits that assemble into four stacked heptameric rings, resulting in a barrel-shaped structure. The two inner rings, each composed of seven catalytic beta subunits, are sandwiched by two outer rings, each composed of seven alpha subunits. The catalytic chamber with the active sites is on the inside of the barrel. Has a gated structure, the ends of the cylinder being occluded by the N-termini of the alpha-subunits. Is capped by the proteasome-associated ATPase, ARC.

Its subcellular location is the cytoplasm. It catalyses the reaction Cleavage of peptide bonds with very broad specificity.. It functions in the pathway protein degradation; proteasomal Pup-dependent pathway. With respect to regulation, the formation of the proteasomal ATPase ARC-20S proteasome complex, likely via the docking of the C-termini of ARC into the intersubunit pockets in the alpha-rings, may trigger opening of the gate for substrate entry. Interconversion between the open-gate and close-gate conformations leads to a dynamic regulation of the 20S proteasome proteolysis activity. Component of the proteasome core, a large protease complex with broad specificity involved in protein degradation. In Renibacterium salmoninarum (strain ATCC 33209 / DSM 20767 / JCM 11484 / NBRC 15589 / NCIMB 2235), this protein is Proteasome subunit beta.